The following is a 354-amino-acid chain: Chorismate synthase (354 aa).

Residue Arg-48 participates in NADP(+) binding. FMN is bound by residues 126-128 (RAS), Ala-278, 293-297 (KPIPS), and Arg-319.

It belongs to the chorismate synthase family. In terms of assembly, homotetramer. FMNH2 is required as a cofactor.

It catalyses the reaction 5-O-(1-carboxyvinyl)-3-phosphoshikimate = chorismate + phosphate. Its pathway is metabolic intermediate biosynthesis; chorismate biosynthesis; chorismate from D-erythrose 4-phosphate and phosphoenolpyruvate: step 7/7. Functionally, catalyzes the anti-1,4-elimination of the C-3 phosphate and the C-6 proR hydrogen from 5-enolpyruvylshikimate-3-phosphate (EPSP) to yield chorismate, which is the branch point compound that serves as the starting substrate for the three terminal pathways of aromatic amino acid biosynthesis. This reaction introduces a second double bond into the aromatic ring system. The sequence is that of Chorismate synthase from Desulfosudis oleivorans (strain DSM 6200 / JCM 39069 / Hxd3) (Desulfococcus oleovorans).